The sequence spans 255 residues: Type III pantothenate kinase (255 aa).

6-13 (DVGNTNIV) is a binding site for ATP. Residues Tyr100 and 107–110 (GADR) contribute to the substrate site. Asp109 acts as the Proton acceptor in catalysis. Asp129 serves as a coordination point for K(+). ATP is bound at residue Thr132. Residue Thr184 coordinates substrate.

The protein belongs to the type III pantothenate kinase family. As to quaternary structure, homodimer. Requires NH4(+) as cofactor. It depends on K(+) as a cofactor.

The protein resides in the cytoplasm. It carries out the reaction (R)-pantothenate + ATP = (R)-4'-phosphopantothenate + ADP + H(+). It functions in the pathway cofactor biosynthesis; coenzyme A biosynthesis; CoA from (R)-pantothenate: step 1/5. In terms of biological role, catalyzes the phosphorylation of pantothenate (Pan), the first step in CoA biosynthesis. The protein is Type III pantothenate kinase of Thermoanaerobacter sp. (strain X514).